The following is a 316-amino-acid chain: Porphobilinogen deaminase (316 aa).

S-(dipyrrolylmethanemethyl)cysteine is present on cysteine 249.

The protein belongs to the HMBS family. Monomer. It depends on dipyrromethane as a cofactor.

The catalysed reaction is 4 porphobilinogen + H2O = hydroxymethylbilane + 4 NH4(+). The protein operates within porphyrin-containing compound metabolism; protoporphyrin-IX biosynthesis; coproporphyrinogen-III from 5-aminolevulinate: step 2/4. Its function is as follows. Tetrapolymerization of the monopyrrole PBG into the hydroxymethylbilane pre-uroporphyrinogen in several discrete steps. The chain is Porphobilinogen deaminase from Nitrobacter winogradskyi (strain ATCC 25391 / DSM 10237 / CIP 104748 / NCIMB 11846 / Nb-255).